Consider the following 486-residue polypeptide: Cardiolipin synthase A (486 aa).

2 helical membrane passes run 3–23 (TFYT…IAGV) and 38–58 (MAWL…YLSF). 2 PLD phosphodiesterase domains span residues 219-246 (MDLR…VDPR) and 399-426 (EGGL…DMRS). Active-site residues include histidine 224, lysine 226, aspartate 231, histidine 404, lysine 406, and aspartate 411.

The protein belongs to the phospholipase D family. Cardiolipin synthase subfamily. ClsA sub-subfamily.

The protein resides in the cell inner membrane. The enzyme catalyses 2 a 1,2-diacyl-sn-glycero-3-phospho-(1'-sn-glycerol) = a cardiolipin + glycerol. Catalyzes the reversible phosphatidyl group transfer from one phosphatidylglycerol molecule to another to form cardiolipin (CL) (diphosphatidylglycerol) and glycerol. This Klebsiella pneumoniae subsp. pneumoniae (strain ATCC 700721 / MGH 78578) protein is Cardiolipin synthase A.